The following is a 165-amino-acid chain: Selenoprotein F (165 aa).

The first 31 residues, 1 to 31 (MVAMAAGPSGCLVPAFGLRLLLATVLQAVSA), serve as a signal peptide directing secretion. Residue selenocysteine 96 is a non-standard amino acid, selenocysteine.

Forms a tight complex with UGGT1/UGCGL1. Interacts with UGGT2/UGCGL2. Interacts with RDH11. The N-terminus is blocked. Higher levels in prostate and thyroid gland.

It is found in the endoplasmic reticulum lumen. Functionally, may be involved in redox reactions associated with the formation of disulfide bonds. May contribute to the quality control of protein folding in the endoplasmic reticulum. May regulate protein folding by enhancing the catalytic activity of UGGT1/UGCGL1 and UGGT2/UGCGL2. This chain is Selenoprotein F, found in Homo sapiens (Human).